Consider the following 431-residue polypeptide: Enolase (431 aa).

Glutamine 168 contributes to the (2R)-2-phosphoglycerate binding site. Glutamate 210 functions as the Proton donor in the catalytic mechanism. Mg(2+) is bound by residues aspartate 247, glutamate 291, and aspartate 318. Lysine 343, arginine 372, serine 373, and lysine 394 together coordinate (2R)-2-phosphoglycerate. Lysine 343 serves as the catalytic Proton acceptor.

Belongs to the enolase family. In terms of assembly, component of the RNA degradosome, a multiprotein complex involved in RNA processing and mRNA degradation. Mg(2+) serves as cofactor.

It is found in the cytoplasm. Its subcellular location is the secreted. The protein resides in the cell surface. It catalyses the reaction (2R)-2-phosphoglycerate = phosphoenolpyruvate + H2O. The protein operates within carbohydrate degradation; glycolysis; pyruvate from D-glyceraldehyde 3-phosphate: step 4/5. Its function is as follows. Catalyzes the reversible conversion of 2-phosphoglycerate (2-PG) into phosphoenolpyruvate (PEP). It is essential for the degradation of carbohydrates via glycolysis. The protein is Enolase of Acinetobacter baumannii (strain AYE).